We begin with the raw amino-acid sequence, 154 residues long: Aspartate 1-decarboxylase 1 (154 aa).

Ser26 (schiff-base intermediate with substrate; via pyruvic acid) is an active-site residue. Ser26 is subject to Pyruvic acid (Ser). Substrate is bound at residue Thr58. Tyr59 functions as the Proton donor in the catalytic mechanism. A substrate-binding site is contributed by 74–76 (GAA). The interval 129–154 (VGLVRGDTNSPQPSLSEQAGDPRRAQ) is disordered. A compositionally biased stretch (polar residues) spans 135 to 145 (DTNSPQPSLSE).

This sequence belongs to the PanD family. Heterooctamer of four alpha and four beta subunits. It depends on pyruvate as a cofactor. Is synthesized initially as an inactive proenzyme, which is activated by self-cleavage at a specific serine bond to produce a beta-subunit with a hydroxyl group at its C-terminus and an alpha-subunit with a pyruvoyl group at its N-terminus.

Its subcellular location is the cytoplasm. The catalysed reaction is L-aspartate + H(+) = beta-alanine + CO2. It participates in cofactor biosynthesis; (R)-pantothenate biosynthesis; beta-alanine from L-aspartate: step 1/1. Functionally, catalyzes the pyruvoyl-dependent decarboxylation of aspartate to produce beta-alanine. The chain is Aspartate 1-decarboxylase 1 from Frankia casuarinae (strain DSM 45818 / CECT 9043 / HFP020203 / CcI3).